Reading from the N-terminus, the 287-residue chain is MTAQYIDGKAIAAQLRAEIKAEVASLREQGIVPKLAVILVGDDPASVVYARSKEKAAANLGIAFELFTLPGDTTEAALLALIERLNADAAVHGIMVELPLPKQISKEKVLEAIHPLKDVDGVHPLNRGYLMAGQPGLVPATPMSCMELLARSGVELAGKRVVIIGRGETVGKPLFFLLLRRNATVTVCHTRTKDLAAEVRRAEIVIAAAGKAGLVTGEMIAPDAVVIDAGINEGEDGNIVGDVKTAEAAERASLISPVPGGVGACTTALLFRNVLFGLKLQGGMAHE.

NADP(+)-binding positions include 165–167, threonine 190, and isoleucine 231; that span reads GRG.

It belongs to the tetrahydrofolate dehydrogenase/cyclohydrolase family. As to quaternary structure, homodimer.

It catalyses the reaction (6R)-5,10-methylene-5,6,7,8-tetrahydrofolate + NADP(+) = (6R)-5,10-methenyltetrahydrofolate + NADPH. The catalysed reaction is (6R)-5,10-methenyltetrahydrofolate + H2O = (6R)-10-formyltetrahydrofolate + H(+). The protein operates within one-carbon metabolism; tetrahydrofolate interconversion. In terms of biological role, catalyzes the oxidation of 5,10-methylenetetrahydrofolate to 5,10-methenyltetrahydrofolate and then the hydrolysis of 5,10-methenyltetrahydrofolate to 10-formyltetrahydrofolate. This is Bifunctional protein FolD from Heliobacterium modesticaldum (strain ATCC 51547 / Ice1).